A 121-amino-acid chain; its full sequence is Type II secretion system protein I (121 aa).

Positions Met-1–Gly-6 are cleaved as a propeptide — leader sequence. Met-7 bears the N-methylmethionine mark. The chain crosses the membrane as a helical span at residues Met-7–Met-27.

The protein belongs to the GSP I family. As to quaternary structure, type II secretion is composed of four main components: the outer membrane complex, the inner membrane complex, the cytoplasmic secretion ATPase and the periplasm-spanning pseudopilus. Interacts with core component PulG. In terms of processing, cleaved by prepilin peptidase. Methylated by prepilin peptidase at the amino group of the N-terminal methionine once the leader sequence is cleaved by prepilin peptidase.

It is found in the cell inner membrane. In terms of biological role, component of the type II secretion system required for the energy-dependent secretion of extracellular factors such as proteases and toxins from the periplasm. Part of the pseudopilus tip complex that is critical for the recognition and binding of secretion substrates. The chain is Type II secretion system protein I (pulI) from Klebsiella pneumoniae.